The following is a 396-amino-acid chain: Calreticulin (396 aa).

The first 15 residues, 1 to 15 (MKSLCLLAIVAVVSA), serve as a signal peptide directing secretion. Cysteines 101 and 133 form a disulfide. 4 residues coordinate an alpha-D-glucoside: tyrosine 105, lysine 107, tyrosine 124, and aspartate 131. Tandem repeats lie at residues 186–197 (AQTGSLEEDWDL), 205–216 (DPDAKKPEDWDE), 222–233 (DAEDVKPEDWEK), 239–250 (DPDAKKPEDWDD), 254–264 (GEWEPPMIDNP), 268–278 (GEWKPKQIKNP), and 282–292 (GKWIHPEIENP). The 4 X approximate repeats stretch occupies residues 186-250 (AQTGSLEEDW…DAKKPEDWDD (65 aa)). The segment at 193 to 301 (EDWDLLPAKK…PEYTPDDELY (109 aa)) is P-domain. A compositionally biased stretch (basic and acidic residues) spans 202–212 (KIKDPDAKKPE). Residues 202–250 (KIKDPDAKKPEDWDEREYIDDAEDVKPEDWEKPEHIPDPDAKKPEDWDD) are disordered. The segment covering 213–224 (DWDEREYIDDAE) has biased composition (acidic residues). Over residues 225–246 (DVKPEDWEKPEHIPDPDAKKPE) the composition is skewed to basic and acidic residues. A 3 X approximate repeats region spans residues 254-292 (GEWEPPMIDNPEYKGEWKPKQIKNPAYKGKWIHPEIENP). A C-domain region spans residues 302–396 (LYENWGAIGF…KEEEEGHDEL (95 aa)). Residue aspartate 312 participates in an alpha-D-glucoside binding. The segment covering 342 to 380 (FDKLKTVEKEKKEKADEEARKVEEEARKKAEEEKEAKKD) has biased composition (basic and acidic residues). The segment at 342–396 (FDKLKTVEKEKKEKADEEARKVEEEARKKAEEEKEAKKDDDEEEEKEEEEGHDEL) is disordered. Positions 381 to 396 (DDEEEEKEEEEGHDEL) are enriched in acidic residues. The Prevents secretion from ER motif lies at 393–396 (HDEL).

This sequence belongs to the calreticulin family.

It is found in the endoplasmic reticulum lumen. Functionally, molecular calcium-binding chaperone promoting folding, oligomeric assembly and quality control in the ER via the calreticulin/calnexin cycle. This lectin may interact transiently with almost all of the monoglucosylated glycoproteins that are synthesized in the ER. Probably by controlling the folding of extracellular matrix protein unc-52/Perlecan, may play a role in the formation of fibrous organelles, a hemidesmosome-like structure attaching muscles to the epidermis. Protects dopaminergic neurons against oxidative stress-induced neurodegeneration. The sequence is that of Calreticulin (crt-1) from Caenorhabditis briggsae.